A 358-amino-acid polypeptide reads, in one-letter code: scyllo-inositol 2-dehydrogenase (NADP(+)) IolW (358 aa).

This sequence belongs to the Gfo/Idh/MocA family.

It catalyses the reaction scyllo-inositol + NADP(+) = scyllo-inosose + NADPH + H(+). Functionally, catalyzes the reversible NADPH-dependent reduction of scyllo-inosose (SIS) to scyllo-inositol (SI). Cannot use NADH instead of NADPH. May be involved in reduction of not only SIS but also various oxidized compounds manifested upon stressful conditions. In Bacillus subtilis (strain 168), this protein is scyllo-inositol 2-dehydrogenase (NADP(+)) IolW.